The primary structure comprises 91 residues: Putative regulatory protein DSY2730 (91 aa).

The protein belongs to the RemA family.

This Desulfitobacterium hafniense (strain Y51) protein is Putative regulatory protein DSY2730.